A 30-amino-acid polypeptide reads, in one-letter code: Conotoxin TVIIA (30 aa).

3 cysteine pairs are disulfide-bonded: C2–C14, C9–C19, and C13–C24. A 4-hydroxyproline mark is found at P10 and P11.

Post-translationally, three different forms of TVIIA exist. Pro-10 and Pro-11 of conotoxin TVIIA are hydroxylated in TVIIA, whereas Pro-10 is not hydroxylated in [Pro10]TVIIA and neither Pro-10 nor Pro-11 are hydroxylated in [Pro10,11]TVIIA. In terms of tissue distribution, expressed by the venom duct.

Its subcellular location is the secreted. Functionally, by structural similarity with conotoxin GS, may inhibit the sodium channel (Nav). No effect was observed upon intracranial injections into mice and intraperitoneal injections into goldfish (25 ug). The sequence is that of Conotoxin TVIIA from Conus tulipa (Fish-hunting cone snail).